A 226-amino-acid chain; its full sequence is MLIVIDALLAEAEVLKWRARLEDAEWLDGRGTGGTLSAAVKSNLQLPDTSELAINLGNTIVQKLGVHPLFLSAALPEKIYPPKFNCYRNGGAYGTHVDSAIMVMPNKQSLRTDISATLFLSDPDSYDGGELEIETAFGAQAVKLNAGDLVLYPSSSLHRVTPVTRGQRVASFIWIQSMVPDEAERALLFDLDQSIQSLISEKPADDPTLLRLTSVYHNLLRRYAKF.

Residues 78-177 form the Fe2OG dioxygenase domain; the sequence is KIYPPKFNCY…RVASFIWIQS (100 aa). Fe cation contacts are provided by histidine 96, aspartate 98, and histidine 158. Arginine 168 contributes to the 2-oxoglutarate binding site.

It depends on Fe(2+) as a cofactor. L-ascorbate serves as cofactor.

In Teredinibacter turnerae (strain ATCC 39867 / T7901), this protein is PKHD-type hydroxylase TERTU_2553.